The primary structure comprises 104 residues: Large ribosomal subunit protein bL21 (104 aa).

It belongs to the bacterial ribosomal protein bL21 family. Part of the 50S ribosomal subunit. Contacts protein L20.

In terms of biological role, this protein binds to 23S rRNA in the presence of protein L20. This is Large ribosomal subunit protein bL21 from Agrobacterium fabrum (strain C58 / ATCC 33970) (Agrobacterium tumefaciens (strain C58)).